Reading from the N-terminus, the 141-residue chain is UPF0102 protein BRADO0179 (141 aa).

Residues 1 to 24 (MAETDRATDKPAGAPKPAKTASPE) form a disordered region. Residues 10–19 (KPAGAPKPAK) are compositionally biased toward low complexity.

Belongs to the UPF0102 family.

The chain is UPF0102 protein BRADO0179 from Bradyrhizobium sp. (strain ORS 278).